Here is a 191-residue protein sequence, read N- to C-terminus: Early nodulin-like protein 8 (191 aa).

The N-terminal stretch at 1-22 (MGVMSLSKTMVVVVLQVMILLG) is a signal peptide. Residues 31–133 (TLYKVGDLDA…YQKLLVSVGT (103 aa)) enclose the Phytocyanin domain. Cysteine 87 and cysteine 121 are oxidised to a cystine. Residues asparagine 104 and asparagine 108 are each glycosylated (N-linked (GlcNAc...) asparagine). Serine 165 carries the GPI-anchor amidated serine lipid modification. A propeptide spans 166 to 191 (SASSSLISAFSTVAASLACAVVGAIM) (removed in mature form).

This sequence belongs to the early nodulin-like (ENODL) family. As to expression, mostly expressed in seedlings and roots, and, to a lower extent, in leaves, flowers, stems and seeds.

It localises to the cell membrane. Functionally, may act as a carbohydrate transporter. The polypeptide is Early nodulin-like protein 8 (Arabidopsis thaliana (Mouse-ear cress)).